Here is a 788-residue protein sequence, read N- to C-terminus: Pyridoxal-dependent decarboxylase domain-containing protein 1 (788 aa).

Residues 28–40 (EDSQRRTEEENGK) show a composition bias toward basic and acidic residues. The tract at residues 28–51 (EDSQRRTEEENGKKLISGDIPGPL) is disordered. At Thr414 the chain carries Phosphothreonine. Ser652 carries the phosphoserine modification. The disordered stretch occupies residues 684–788 (AGVTLPPTPS…SQVEGPESLR (105 aa)). Residues Thr687 and Thr691 each carry the phosphothreonine modification. 3 positions are modified to phosphoserine: Ser710, Ser718, and Ser722. A compositionally biased stretch (basic and acidic residues) spans 725–734 (HIEDLEKVER). Residues 738–750 (GPEQITLEASSTE) show a composition bias toward polar residues. Phosphoserine occurs at positions 748, 757, 779, and 786. Residues 772 to 788 (PHPEDDHSQVEGPESLR) are compositionally biased toward basic and acidic residues.

Belongs to the group II decarboxylase family. Requires pyridoxal 5'-phosphate as cofactor.

The chain is Pyridoxal-dependent decarboxylase domain-containing protein 1 (PDXDC1) from Homo sapiens (Human).